We begin with the raw amino-acid sequence, 240 residues long: 1-(5-phosphoribosyl)-5-[(5-phosphoribosylamino)methylideneamino] imidazole-4-carboxamide isomerase (240 aa).

The active-site Proton acceptor is Asp-8. The active-site Proton donor is the Asp-129.

The protein belongs to the HisA/HisF family.

The protein resides in the cytoplasm. It carries out the reaction 1-(5-phospho-beta-D-ribosyl)-5-[(5-phospho-beta-D-ribosylamino)methylideneamino]imidazole-4-carboxamide = 5-[(5-phospho-1-deoxy-D-ribulos-1-ylimino)methylamino]-1-(5-phospho-beta-D-ribosyl)imidazole-4-carboxamide. The protein operates within amino-acid biosynthesis; L-histidine biosynthesis; L-histidine from 5-phospho-alpha-D-ribose 1-diphosphate: step 4/9. This chain is 1-(5-phosphoribosyl)-5-[(5-phosphoribosylamino)methylideneamino] imidazole-4-carboxamide isomerase, found in Clostridioides difficile (strain 630) (Peptoclostridium difficile).